The primary structure comprises 410 residues: Argininosuccinate synthase (410 aa).

Residue 9–17 coordinates ATP; sequence AYSGGLDTS. Tyr86 is a binding site for L-citrulline. Gly116 serves as a coordination point for ATP. Residues Thr118, Asn122, and Asp123 each coordinate L-aspartate. Asn122 is a binding site for L-citrulline. The L-citrulline site is built by Arg126, Ser174, Glu259, and Tyr271.

The protein belongs to the argininosuccinate synthase family. Type 1 subfamily. In terms of assembly, homotetramer.

It localises to the cytoplasm. It catalyses the reaction L-citrulline + L-aspartate + ATP = 2-(N(omega)-L-arginino)succinate + AMP + diphosphate + H(+). Its pathway is amino-acid biosynthesis; L-arginine biosynthesis; L-arginine from L-ornithine and carbamoyl phosphate: step 2/3. This Limosilactobacillus reuteri (strain DSM 20016) (Lactobacillus reuteri) protein is Argininosuccinate synthase.